We begin with the raw amino-acid sequence, 490 residues long: Subtilisin-like protease 8 (490 aa).

Residues 1–26 (MKGLLSLSVLPVLAYASPMIVDSIHQ) form the signal peptide. A propeptide spanning residues 27 to 134 (NAAPILSSTN…YIERDSEVHT (108 aa)) is cleaved from the precursor. Residues 43 to 134 (SYIVVFKKGV…YIERDSEVHT (92 aa)) form the Inhibitor I9 domain. The Peptidase S8 domain maps to 144 to 450 (PWGLARISHR…GGSDDYKKII (307 aa)). Catalysis depends on charge relay system residues Asp-180 and His-212. Asn-282 is a glycosylation site (N-linked (GlcNAc...) asparagine). Catalysis depends on Ser-378, which acts as the Charge relay system. Residue Asn-456 is glycosylated (N-linked (GlcNAc...) asparagine).

It belongs to the peptidase S8 family.

The protein resides in the secreted. Secreted subtilisin-like serine protease with keratinolytic activity that contributes to pathogenicity. The polypeptide is Subtilisin-like protease 8 (SUB8) (Arthroderma benhamiae (strain ATCC MYA-4681 / CBS 112371) (Trichophyton mentagrophytes)).